A 699-amino-acid chain; its full sequence is Kinesin-II 85 kDa subunit (699 aa).

A Kinesin motor domain is found at 10-342 (NVRVVVRCRP…LRYANRAKNI (333 aa)). 97 to 104 (GQTGTGKT) contributes to the ATP binding site. The stretch at 341–619 (NIKNKAKINE…EDIGEWQLKC (279 aa)) forms a coiled coil. Disordered stretches follow at residues 369–415 (KQIS…LSPE), 432–456 (EEKK…ESEL), and 660–699 (GMKY…ALLQ). The span at 376–395 (EGLDDDEESGSEESGDEEAG) shows a compositional bias: acidic residues. The segment covering 400 to 411 (KKKRKGKNPKRK) has biased composition (basic residues). Residues 620-699 (VAYTGNNMRK…MASSIDALLQ (80 aa)) are globular. Over residues 667 to 679 (QGKSGRPKTSSGR) the composition is skewed to polar residues.

It belongs to the TRAFAC class myosin-kinesin ATPase superfamily. Kinesin family. Kinesin II subfamily. As to quaternary structure, heterotrimer of a 115 kDa subunit (KAP115) and two kinesin-like subunits of 95 kDa (KRP95) and 85 kDa (KRP85). In terms of processing, the N-terminus is blocked.

Its subcellular location is the cytoplasm. It localises to the cytoskeleton. This is Kinesin-II 85 kDa subunit (KRP85) from Strongylocentrotus purpuratus (Purple sea urchin).